Here is a 203-residue protein sequence, read N- to C-terminus: ATP-dependent Clp protease proteolytic subunit (203 aa).

The Nucleophile role is filled by Ser-98. His-123 is a catalytic residue.

It belongs to the peptidase S14 family. In terms of assembly, fourteen ClpP subunits assemble into 2 heptameric rings which stack back to back to give a disk-like structure with a central cavity, resembling the structure of eukaryotic proteasomes.

It is found in the cytoplasm. The catalysed reaction is Hydrolysis of proteins to small peptides in the presence of ATP and magnesium. alpha-casein is the usual test substrate. In the absence of ATP, only oligopeptides shorter than five residues are hydrolyzed (such as succinyl-Leu-Tyr-|-NHMec, and Leu-Tyr-Leu-|-Tyr-Trp, in which cleavage of the -Tyr-|-Leu- and -Tyr-|-Trp bonds also occurs).. In terms of biological role, cleaves peptides in various proteins in a process that requires ATP hydrolysis. Has a chymotrypsin-like activity. Plays a major role in the degradation of misfolded proteins. The polypeptide is ATP-dependent Clp protease proteolytic subunit (Desulfotalea psychrophila (strain LSv54 / DSM 12343)).